We begin with the raw amino-acid sequence, 694 residues long: Envelope glycoprotein H (694 aa).

The signal sequence occupies residues methionine 1 to serine 16. Topologically, residues tryptophan 17 to isoleucine 671 are virion surface. Residues asparagine 51, asparagine 76, asparagine 148, asparagine 206, asparagine 337, asparagine 365, asparagine 384, asparagine 411, asparagine 538, asparagine 573, asparagine 593, and asparagine 652 are each glycosylated (N-linked (GlcNAc...) asparagine; by host). The segment at tyrosine 174–isoleucine 234 is interaction with gL. The chain crosses the membrane as a helical span at residues leucine 672–arginine 692. Residues leucine 693–cysteine 694 lie on the Intravirion side of the membrane.

It belongs to the herpesviridae glycoprotein H family. In terms of assembly, interacts with glycoprotein L (gL); this interaction is necessary for the correct processing and cell surface expression of gH. The heterodimer gH/gL seems to interact with gB trimers during fusion. In terms of processing, N-glycosylated, O-glycosylated, and sialylated.

The protein localises to the virion membrane. The protein resides in the host cell membrane. Its subcellular location is the host endosome membrane. Functionally, the heterodimer glycoprotein H-glycoprotein L is required for the fusion of viral and plasma membranes leading to virus entry into the host cell. Following initial binding to host receptor, membrane fusion is mediated by the fusion machinery composed of gB and the heterodimer gH/gL. May also be involved in the fusion between the virion envelope and the outer nuclear membrane during virion morphogenesis. The polypeptide is Envelope glycoprotein H (Human herpesvirus 6B (strain Z29) (HHV-6 variant B)).